Consider the following 330-residue polypeptide: DNA-directed RNA polymerase subunit alpha (330 aa).

The tract at residues M1–K237 is alpha N-terminal domain (alpha-NTD). The segment at F251–E330 is alpha C-terminal domain (alpha-CTD).

Belongs to the RNA polymerase alpha chain family. As to quaternary structure, homodimer. The RNAP catalytic core consists of 2 alpha, 1 beta, 1 beta' and 1 omega subunit. When a sigma factor is associated with the core the holoenzyme is formed, which can initiate transcription.

The catalysed reaction is RNA(n) + a ribonucleoside 5'-triphosphate = RNA(n+1) + diphosphate. DNA-dependent RNA polymerase catalyzes the transcription of DNA into RNA using the four ribonucleoside triphosphates as substrates. The chain is DNA-directed RNA polymerase subunit alpha from Legionella pneumophila (strain Corby).